The following is a 220-amino-acid chain: StAR-related lipid transfer protein 6 (220 aa).

In terms of domain architecture, START spans 1-208 (MDFKAIAQQT…AKDGIKAHRT (208 aa)).

In terms of biological role, may be involved in the intracellular transport of sterols or other lipids. May bind cholesterol or other sterols. The chain is StAR-related lipid transfer protein 6 (STARD6) from Homo sapiens (Human).